A 941-amino-acid polypeptide reads, in one-letter code: Glycine dehydrogenase (decarboxylating) (941 aa).

N6-(pyridoxal phosphate)lysine is present on K692.

This sequence belongs to the GcvP family. As to quaternary structure, the glycine cleavage system is composed of four proteins: P, T, L and H. The cofactor is pyridoxal 5'-phosphate.

The enzyme catalyses N(6)-[(R)-lipoyl]-L-lysyl-[glycine-cleavage complex H protein] + glycine + H(+) = N(6)-[(R)-S(8)-aminomethyldihydrolipoyl]-L-lysyl-[glycine-cleavage complex H protein] + CO2. Its function is as follows. The glycine cleavage system catalyzes the degradation of glycine. The P protein binds the alpha-amino group of glycine through its pyridoxal phosphate cofactor; CO(2) is released and the remaining methylamine moiety is then transferred to the lipoamide cofactor of the H protein. In Mycobacterium tuberculosis (strain ATCC 25177 / H37Ra), this protein is Glycine dehydrogenase (decarboxylating).